We begin with the raw amino-acid sequence, 93 residues long: Protein FMP16, mitochondrial (93 aa).

A mitochondrion-targeting transit peptide spans 1-25 (MLRTTFLRTPRQLMRKSPRASFSIV). The interval 30 to 93 (FPHLKNNQDE…EQNRPDDGVY (64 aa)) is disordered. Residues 35-93 (NNQDEAEKKEQGLFDSNKKRLDTLEHGKNPDYKQPGMEDLKKKGDDARIEQNRPDDGVY) show a composition bias toward basic and acidic residues.

The protein resides in the mitochondrion. The polypeptide is Protein FMP16, mitochondrial (FMP16) (Saccharomyces cerevisiae (strain ATCC 204508 / S288c) (Baker's yeast)).